Here is a 64-residue protein sequence, read N- to C-terminus: Prokaryotic ubiquitin-like protein Pup (64 aa).

The segment at 1–37 (MAQEQTKRGGGGGDDEDVTGTTAAGQERREKLAQDTD) is disordered. The ARC ATPase binding stretch occupies residues 21–58 (TTAAGQERREKLAQDTDDLLDEIDDVLEENAEDFVRAY). The stretch at 25–52 (GQERREKLAQDTDDLLDEIDDVLEENAE) forms a coiled coil. Residue glutamine 64 is modified to Deamidated glutamine. Glutamine 64 participates in a covalent cross-link: Isoglutamyl lysine isopeptide (Gln-Lys) (interchain with K-? in acceptor proteins).

The protein belongs to the prokaryotic ubiquitin-like protein family. As to quaternary structure, strongly interacts with the proteasome-associated ATPase ARC through a hydrophobic interface; the interacting region of Pup lies in its C-terminal half. There is one Pup binding site per ARC hexamer ring. Is modified by deamidation of its C-terminal glutamine to glutamate by the deamidase Dop, a prerequisite to the subsequent pupylation process.

Its pathway is protein degradation; proteasomal Pup-dependent pathway. In terms of biological role, protein modifier that is covalently attached to lysine residues of substrate proteins, thereby targeting them for proteasomal degradation. The tagging system is termed pupylation. The protein is Prokaryotic ubiquitin-like protein Pup of Mycobacterium marinum (strain ATCC BAA-535 / M).